Consider the following 5386-residue polypeptide: Nonribosomal peptide synthetase 2 (5386 aa).

An adenylation 1 region spans residues 45–435 (HDANAIDFLE…QGLLECLGRV (391 aa)). Positions 544-617 (SPKDPIGHSV…DLIEVCRESK (74 aa)) constitute a Carrier 1 domain. S578 is modified (O-(pantetheine 4'-phosphoryl)serine). Positions 652–1059 (LPCTPLQEAM…VDADRHVSAI (408 aa)) are condensation 1. The adenylation 2 stretch occupies residues 1089–1482 (EKWAATDPHR…GRTDDQVKIR (394 aa)). Residues 1611–1688 (ELLSQWERDV…SLASLKKLQS (78 aa)) form the Carrier 2 domain. O-(pantetheine 4'-phosphoryl)serine is present on S1648. The interval 1731 to 2141 (ILPCTPLQEA…ALSADTDMFP (411 aa)) is condensation 2. Residues 2166 to 2551 (FERTALLHPD…GRLDDQVKIR (386 aa)) are adenylation 3. One can recognise a Carrier 3 domain in the interval 2652–2725 (SKTESEVRNI…DLAEHLDQIS (74 aa)). At S2686 the chain carries O-(pantetheine 4'-phosphoryl)serine. Residues 2763–3174 (RPCTPLQNGM…HSQIPLAKTD (412 aa)) form a condensation 3 region. The adenylation 4 stretch occupies residues 3202 to 3603 (EKTAQEHPQR…GRADDQVKLR (402 aa)). In terms of domain architecture, Carrier 4 spans 3728-3805 (EQWSKQEEKL…RLAKSLAANS (78 aa)). S3765 carries the post-translational modification O-(pantetheine 4'-phosphoryl)serine. A condensation 4 region spans residues 3846 to 4250 (LAPCTPLQQG…LDQAINDPSA (405 aa)). The Carrier 5 domain maps to 4281–4357 (FEWSDNAIAI…KMAQNMSMKN (77 aa)). At S4318 the chain carries O-(pantetheine 4'-phosphoryl)serine. Positions 4391 to 4802 (EEILPLTPLQ…ERAEAPVIDM (412 aa)) are condensation 5. Positions 4821–4842 (HTGSGHVESGEDDGQDTPSTET) are disordered. A Carrier 6 domain is found at 4840–4913 (TETTNRIRKI…KMAKLADARA (74 aa)). S4874 is subject to O-(pantetheine 4'-phosphoryl)serine. The tract at residues 4952–5257 (QMLPVTAGQL…VQAHLRHLND (306 aa)) is condensation 6.

Belongs to the NRP synthetase family.

Its pathway is siderophore biosynthesis. In terms of biological role, nonribosomal peptide synthetase; part of the gene cluster that mediates the biosynthesis of hydroxamate-containing siderophores that play a critical role in virulence. Cochliobolus heterostrophus produces extracellular coprogen-type siderophores including coprogen, neocoprogen I and neocoprogen II, as well as the intracellular siderophore ferricrocin. The role of extracellular siderophores is to supply iron to the fungus during plant infection, and the intracellular ferricrocin is required for intracellular iron distribution and storage with a crucial role in ascus and ascospore development. SIDA2 catalyzes the conversion of L-ornithine to N(5)-hydroxyornithine, the first step in the biosynthesis of all hydroxamate-containing siderophores. The assembly of extracellular coprogen-type siderophores is then performed by the nonribosomal peptide synthetase (NRPS) NPS6 whereas the intracellular siderophore ferricrocin is assembled by NPS2. This Cochliobolus heterostrophus (strain C4 / ATCC 48331 / race T) (Southern corn leaf blight fungus) protein is Nonribosomal peptide synthetase 2.